The chain runs to 192 residues: Elongation factor P (192 aa).

This sequence belongs to the elongation factor P family.

The protein localises to the cytoplasm. It participates in protein biosynthesis; polypeptide chain elongation. Involved in peptide bond synthesis. Stimulates efficient translation and peptide-bond synthesis on native or reconstituted 70S ribosomes in vitro. Probably functions indirectly by altering the affinity of the ribosome for aminoacyl-tRNA, thus increasing their reactivity as acceptors for peptidyl transferase. The polypeptide is Elongation factor P (Borrelia duttonii (strain Ly)).